The chain runs to 435 residues: MDYFENVPKVQYEGKNAKSKYAFRHYNPEEIIMGKPMKDHLRFSVAFWHTMTEDGSDPFGDGTYQRNWEGSTPMETAKNRVDAFFEILEKLGAEYFCFHDVDIAPQGDSLKEFLENIDVMTDYIKGKMDKTGVKLLWNTANMFTHPTFVNGAATTNNADVYSMAAAQVKKGLDVSKKLNGENYVFWGGREGYENLLNTDMNFELDNLARFYQMVIDYAQKIDYHPQFLIEPKPKEPTKHQYDYDAATAMAFIQKYNLEDSFKLNLEANHATLAGHTFEHELNVAKNYNALGSLDANQGDLLLGWDTDEFPTDIYTATLAMYEVLDFGGIAPGGLNFDAKVRRTSFAMDDLILAHIAGMDTYARGLRAAAKMKDDNFFEQIIANRYESFSSGIGKQIVENKEDLESLTNYALSLNGVENKSGHIEHLKSLLNDYLV.

Catalysis depends on residues His99 and Asp102. 7 residues coordinate Mg(2+): Glu230, Glu266, His269, Asp294, Asp305, Asp307, and Asp337.

The protein belongs to the xylose isomerase family. As to quaternary structure, homotetramer. The cofactor is Mg(2+).

It localises to the cytoplasm. The catalysed reaction is alpha-D-xylose = alpha-D-xylulofuranose. The protein is Xylose isomerase (xylA) of Tetragenococcus halophilus (Pediococcus halophilus).